A 156-amino-acid polypeptide reads, in one-letter code: Small ribosomal subunit protein uS7 (156 aa).

It belongs to the universal ribosomal protein uS7 family. Part of the 30S ribosomal subunit. Contacts proteins S9 and S11.

In terms of biological role, one of the primary rRNA binding proteins, it binds directly to 16S rRNA where it nucleates assembly of the head domain of the 30S subunit. Is located at the subunit interface close to the decoding center, probably blocks exit of the E-site tRNA. The polypeptide is Small ribosomal subunit protein uS7 (Magnetococcus marinus (strain ATCC BAA-1437 / JCM 17883 / MC-1)).